The primary structure comprises 478 residues: Probable serine protease do-like (478 aa).

A signal peptide spans Met1–Asn26. Cysteines 87 and 99 form a disulfide. Positions Gly116–Thr254 are serine protease. Active-site charge relay system residues include His133, Asp163, and Ser238. 2 consecutive PDZ domains span residues Gln281–Glu372 and Lys387–Gly469.

It belongs to the peptidase S1C family.

The sequence is that of Probable serine protease do-like (degP) from Buchnera aphidicola subsp. Acyrthosiphon pisum (strain APS) (Acyrthosiphon pisum symbiotic bacterium).